The sequence spans 372 residues: Meiotic drive suppressor wtf18 (372 aa).

The next 6 membrane-spanning stretches (helical) occupy residues 86–106 (FLLRLLISVLAVSVVFFTAWV), 120–140 (AFSVTIGITCPILFIATFCFF), 153–173 (VTVIFLAQCVKVTVIFLAQCV), 197–217 (DLVVTIWLAWVVICFILFGCV), 233–253 (CSISAALFFILLLVCIPIWTL), and 257–277 (LFGLFQVLGVQSCVVIVTKGL).

It belongs to the WTF family. Homomer. Interacts with other proteins that exhibit high sequence similarity.

Its subcellular location is the spore membrane. It is found in the vacuole membrane. Functionally, acts as a suppressor component of the dual wtf meiotic drive system, and can suppress but not confer meiotic drive by compatible poisons. Wtf meiotic drive systems promote unequal transmission of alleles from the parental zygote to progeny spores by encoding a poison and an antidote from the same locus; the poison is trans-acting and forms toxic aggregates in all spores within an ascus, wherease the antidote is spore-specific and targets aggregates for degradation by the vacuole. Meiotic drive by wtf systems therefore lead to poisoning of all progeny that do not inherit the dual poison/antidote allele, or express a compatible antidote. The protein is Meiotic drive suppressor wtf18 of Schizosaccharomyces pombe (strain 972 / ATCC 24843) (Fission yeast).